The primary structure comprises 163 residues: Putative phosphinothricin acetyltransferase YwnH (163 aa).

Residues 1–158 form the N-acetyltransferase domain; it reads MTLRLAEHRD…DGKRYDLKIL (158 aa). Residues 85-87, 94-98, and 124-126 contribute to the acetyl-CoA site; these read IYI, KGVGS, and NKP.

This sequence belongs to the acetyltransferase family. PAT/BAR subfamily.

It catalyses the reaction phosphinothricin + acetyl-CoA = N-acetylphosphinothricin + CoA + H(+). This enzyme is an effector of phosphinothricin tripeptide (PTT or bialaphos) resistance. Inactivates PTT by transfer of an acetyl group. In Bacillus subtilis (strain 168), this protein is Putative phosphinothricin acetyltransferase YwnH (ywnH).